A 450-amino-acid chain; its full sequence is Transcription factor AP-2 gamma (450 aa).

A Glycyl lysine isopeptide (Lys-Gly) (interchain with G-Cter in SUMO) cross-link involves residue lysine 10. 2 disordered regions span residues 13–63 (EDCE…FPPP) and 90–126 (LHQPAPTGSQQQAWPGRQSQEGAGLPSHHGRPAGLLP). The PPxY motif signature appears at 59 to 64 (YFPPPY). The segment covering 95–110 (PTGSQQQAWPGRQSQE) has biased composition (polar residues). Serine 252 carries the post-translational modification Phosphoserine; by PKA. Residues 293 to 424 (RRKAAHVTLL…YIKEALIVID (132 aa)) form an H-S-H (helix-span-helix), dimerization region. The interval 431-450 (GDQSPADSNKTLEKMEKHRK) is disordered. Phosphoserine is present on serine 434. Basic and acidic residues predominate over residues 440 to 450 (KTLEKMEKHRK).

Belongs to the AP-2 family. In terms of assembly, binds DNA as a dimer. Can form homodimers or heterodimers with other AP-2 family members. Interacts with WWOX. Interacts with UBE2I. Interacts with KCTD1; this interaction represses transcription activation. Interacts with CITED2 (via C-terminus); the interaction stimulates TFAP2B-transcriptional activity. Interacts with CITED4. Interacts with MTA1. Sumoylated on Lys-10; which inhibits transcriptional activity.

The protein resides in the nucleus. In terms of biological role, sequence-specific DNA-binding transcription factor that interacts with cellular enhancer elements to regulate transcription of selected genes, and which plays a key role in early embryonic development. AP-2 factors bind to the consensus sequence 5'-GCCNNNGGC-3' and activate genes involved in a large spectrum of important biological functions. TFAP2C plays a key role in early embryonic development by regulating both inner cell mass (ICM) and trophectoderm differentiation. At the 8-cell stage, during morula development, controls expression of cell-polarity genes. Upon trophoblast commitment, binds to late trophectoderm genes in blastocysts together with CDX2, and later to extra-embryonic ectoderm genes together with SOX2. Binds to both closed and open chromatin with other transcription factors. Involved in the MTA1-mediated epigenetic regulation of ESR1 expression in breast cancer. The protein is Transcription factor AP-2 gamma (TFAP2C) of Homo sapiens (Human).